The following is a 592-amino-acid chain: LIM domain-binding protein 1 (592 aa).

2 disordered regions span residues 14–41 (GHPP…NSQN) and 305–368 (PAPE…NPMT). The span at 23-41 (ESSNSHYGMPPSQGTNSQN) shows a compositional bias: polar residues. The span at 322 to 344 (PAANPRGSKKATAAAAAAAAAAT) shows a compositional bias: low complexity. The segment covering 352–368 (PTASPANNQQFPPNPMT) has biased composition (polar residues). In terms of domain architecture, LIM interaction domain (LID) spans 378-417 (DVMVVGEPSMMGSEFGENDERTISRVENSQYDPNAMQMQS). Disordered stretches follow at residues 437 to 458 (HHPG…MGSQ) and 559 to 592 (GGMQ…MITG). Positions 577–586 (GPPPQWPPPN) are enriched in pro residues.

It belongs to the LDB family. Interacts with blmp-1. In terms of tissue distribution, expressed in all neurons and some other tissues of the adult, including vulval muscle, and, in males, all the neurons of the tail region. Expressed in vulval cells.

Its function is as follows. Binds to the LIM domain of LIM domain-containing transcription factors. Required for the blmp-1-mediated transcriptional activation or repression of several hypodermal genes, such as bed-3. Regulates sam-10 nuclear localization in PLM neurons. Has a role in synaptic differentiation of PLM mechanosensory neurons. Involved in gonadogenesis. In Caenorhabditis elegans, this protein is LIM domain-binding protein 1.